A 688-amino-acid chain; its full sequence is Translation initiation factor IF-2 (688 aa).

Composition is skewed to basic and acidic residues over residues 53-62 (GKEKSEKTKE) and 86-95 (KRDDKNEKVN). The interval 53-100 (GKEKSEKTKEEDDEIETTAKNPIKESMNNKKSNKRDDKNEKVNTENAE) is disordered. The tr-type G domain occupies 187–354 (KRSPIITVMG…MILLSSEILE (168 aa)). The segment at 196-203 (GHVDHGKT) is G1. 196 to 203 (GHVDHGKT) lines the GTP pocket. The interval 221 to 225 (GITQH) is G2. Residues 242–245 (DTPG) form a G3 region. Residues 242–246 (DTPGH) and 296–299 (NKID) contribute to the GTP site. A G4 region spans residues 296–299 (NKID). The segment at 332–334 (SAH) is G5.

Belongs to the TRAFAC class translation factor GTPase superfamily. Classic translation factor GTPase family. IF-2 subfamily.

It localises to the cytoplasm. Functionally, one of the essential components for the initiation of protein synthesis. Protects formylmethionyl-tRNA from spontaneous hydrolysis and promotes its binding to the 30S ribosomal subunits. Also involved in the hydrolysis of GTP during the formation of the 70S ribosomal complex. The sequence is that of Translation initiation factor IF-2 from Clostridium botulinum (strain ATCC 19397 / Type A).